The primary structure comprises 315 residues: Ribosomal protein L11 methyltransferase (315 aa).

S-adenosyl-L-methionine contacts are provided by threonine 152, glycine 185, aspartate 207, and asparagine 249.

The protein belongs to the methyltransferase superfamily. PrmA family.

Its subcellular location is the cytoplasm. The catalysed reaction is L-lysyl-[protein] + 3 S-adenosyl-L-methionine = N(6),N(6),N(6)-trimethyl-L-lysyl-[protein] + 3 S-adenosyl-L-homocysteine + 3 H(+). Functionally, methylates ribosomal protein L11. This is Ribosomal protein L11 methyltransferase from Geotalea uraniireducens (strain Rf4) (Geobacter uraniireducens).